The sequence spans 209 residues: Thymidine kinase (209 aa).

Residues 9 to 16 (AAMNAGKS) and 88 to 91 (DEAQ) each bind ATP. Glu89 functions as the Proton acceptor in the catalytic mechanism. Cys146, Cys148, Cys183, and His186 together coordinate Zn(2+).

The protein belongs to the thymidine kinase family. In terms of assembly, homotetramer.

The protein localises to the cytoplasm. The catalysed reaction is thymidine + ATP = dTMP + ADP + H(+). The chain is Thymidine kinase from Legionella pneumophila subsp. pneumophila (strain Philadelphia 1 / ATCC 33152 / DSM 7513).